The following is a 72-amino-acid chain: Large ribosomal subunit protein bL28 (72 aa).

This sequence belongs to the bacterial ribosomal protein bL28 family.

The protein is Large ribosomal subunit protein bL28 of Chlorobium phaeobacteroides (strain BS1).